We begin with the raw amino-acid sequence, 110 residues long: Small ribosomal subunit protein eS24 (110 aa).

The interval 91–110 (RNKVEEQAEEAEEAEAGAAE) is disordered. Over residues 97 to 110 (QAEEAEEAEAGAAE) the composition is skewed to acidic residues.

Belongs to the eukaryotic ribosomal protein eS24 family.

This Archaeoglobus fulgidus (strain ATCC 49558 / DSM 4304 / JCM 9628 / NBRC 100126 / VC-16) protein is Small ribosomal subunit protein eS24.